The primary structure comprises 87 residues: UPF0248 protein TON_0940 (87 aa).

The protein belongs to the UPF0248 family.

The polypeptide is UPF0248 protein TON_0940 (Thermococcus onnurineus (strain NA1)).